The following is a 180-amino-acid chain: ATP synthase subunit delta (180 aa).

Belongs to the ATPase delta chain family. As to quaternary structure, F-type ATPases have 2 components, F(1) - the catalytic core - and F(0) - the membrane proton channel. F(1) has five subunits: alpha(3), beta(3), gamma(1), delta(1), epsilon(1). CF(0) has four main subunits: a(1), b(1), b'(1) and c(10-14). The alpha and beta chains form an alternating ring which encloses part of the gamma chain. F(1) is attached to F(0) by a central stalk formed by the gamma and epsilon chains, while a peripheral stalk is formed by the delta, b and b' chains.

The protein localises to the cellular thylakoid membrane. Functionally, f(1)F(0) ATP synthase produces ATP from ADP in the presence of a proton or sodium gradient. F-type ATPases consist of two structural domains, F(1) containing the extramembraneous catalytic core and F(0) containing the membrane proton channel, linked together by a central stalk and a peripheral stalk. During catalysis, ATP synthesis in the catalytic domain of F(1) is coupled via a rotary mechanism of the central stalk subunits to proton translocation. This protein is part of the stalk that links CF(0) to CF(1). It either transmits conformational changes from CF(0) to CF(1) or is implicated in proton conduction. In Synechococcus elongatus (strain ATCC 33912 / PCC 7942 / FACHB-805) (Anacystis nidulans R2), this protein is ATP synthase subunit delta.